Reading from the N-terminus, the 245-residue chain is 1-(5-phosphoribosyl)-5-[(5-phosphoribosylamino)methylideneamino] imidazole-4-carboxamide isomerase (245 aa).

The Proton acceptor role is filled by aspartate 7. Catalysis depends on aspartate 129, which acts as the Proton donor.

It belongs to the HisA/HisF family.

Its subcellular location is the cytoplasm. The enzyme catalyses 1-(5-phospho-beta-D-ribosyl)-5-[(5-phospho-beta-D-ribosylamino)methylideneamino]imidazole-4-carboxamide = 5-[(5-phospho-1-deoxy-D-ribulos-1-ylimino)methylamino]-1-(5-phospho-beta-D-ribosyl)imidazole-4-carboxamide. It functions in the pathway amino-acid biosynthesis; L-histidine biosynthesis; L-histidine from 5-phospho-alpha-D-ribose 1-diphosphate: step 4/9. In Shigella boydii serotype 18 (strain CDC 3083-94 / BS512), this protein is 1-(5-phosphoribosyl)-5-[(5-phosphoribosylamino)methylideneamino] imidazole-4-carboxamide isomerase.